Here is a 283-residue protein sequence, read N- to C-terminus: Putative casein kinase II subunit beta-4 (283 aa).

Disordered stretches follow at residues 1–23 and 35–92; these read MYKD…EILG and LDKH…SEGD. The segment covering 7–16 has biased composition (gly residues); it reads GGGIMGGGGS. A compositionally biased stretch (polar residues) spans 58–70; it reads VPSTSTAKSQLHS.

This sequence belongs to the casein kinase 2 subunit beta family. As to quaternary structure, heterotetramer of two catalytic alpha subunits and two regulatory beta subunits. Phosphorylated by alpha subunit.

It localises to the cytoplasm. The protein resides in the cytosol. Plays a complex role in regulating the basal catalytic activity of the alpha subunit. The tetrameric holoenzyme CK2, composed of two alpha and two beta subunits, phosphorylates the transcription factor PIF1 after an exposure to light, resulting in a proteasome-dependent degradation of PIF1 and promotion of photomorphogenesis. CK2 phosphorylates translation initiation factors. May participate in the regulation of the initiation of translation. The polypeptide is Putative casein kinase II subunit beta-4 (Arabidopsis thaliana (Mouse-ear cress)).